The primary structure comprises 500 residues: Cobyric acid synthase (500 aa).

In terms of domain architecture, GATase cobBQ-type spans 253–446 (KIGVAAIYFP…FHGFFDRPEV (194 aa)). The active-site Nucleophile is C334. H438 is an active-site residue.

This sequence belongs to the CobB/CobQ family. CobQ subfamily.

It participates in cofactor biosynthesis; adenosylcobalamin biosynthesis. In terms of biological role, catalyzes amidations at positions B, D, E, and G on adenosylcobyrinic A,C-diamide. NH(2) groups are provided by glutamine, and one molecule of ATP is hydrogenolyzed for each amidation. In Chlorobaculum tepidum (strain ATCC 49652 / DSM 12025 / NBRC 103806 / TLS) (Chlorobium tepidum), this protein is Cobyric acid synthase.